The sequence spans 478 residues: Melanopsin (478 aa).

Positions 1–14 (MNPPSGPRVPPSPT) are enriched in pro residues. The disordered stretch occupies residues 1-32 (MNPPSGPRVPPSPTQEPSCMATPAPPSWWDSS). Residues 1–72 (MNPPSGPRVP…VDVPDHAHYT (72 aa)) lie on the Extracellular side of the membrane. Residues 73 to 93 (LGTVILLVGLTGMLGNLTVIY) form a helical membrane-spanning segment. Residues 94-107 (TFCRSRSLRTPANM) lie on the Cytoplasmic side of the membrane. The helical transmembrane segment at 108-128 (FIINLAVSDFLMSFTQAPVFF) threads the bilayer. Residues 129 to 144 (TSSLYKQWLFGETGCE) lie on the Extracellular side of the membrane. The cysteines at positions 143 and 221 are disulfide-linked. A helical membrane pass occupies residues 145–165 (FYAFCGALFGISSMITLTAIA). Topologically, residues 166–188 (LDRYLVITRPLATFGVASKRRAA) are cytoplasmic. Residues 189–209 (FVLLGVWLYALAWSLPPFFGW) traverse the membrane as a helical segment. Residues 210-238 (SAYVPEGLLTSCSWDYMSFTPAVRAYTML) lie on the Extracellular side of the membrane. Residues 239–259 (LCCFVFFLPLLIIIYCYIFIF) traverse the membrane as a helical segment. At 260-296 (RAIRETGRALQTFGACKGNGESLWQRQRLQSECKMAK) the chain is on the cytoplasmic side. A helical transmembrane segment spans residues 297–317 (IMLLVILLFVLSWAPYSAVAL). The Extracellular portion of the chain corresponds to 318 to 332 (VAFAGYAHVLTPYMS). Residues 333–353 (SVPAVIAKASAIHNPIIYAIT) form a helical membrane-spanning segment. K340 carries the post-translational modification N6-(retinylidene)lysine. The Cytoplasmic portion of the chain corresponds to 354–478 (HPKYRVAIAQ…GLIPSQDPRM (125 aa)). The tract at residues 440-478 (LYGQGLEDLEAKAPPRPQGHEAETPGKTKGLIPSQDPRM) is disordered. A compositionally biased stretch (basic and acidic residues) spans 448 to 465 (LEAKAPPRPQGHEAETPG).

The protein belongs to the G-protein coupled receptor 1 family. Opsin subfamily. As to expression, expressed in the retina.

Its subcellular location is the cell membrane. The protein localises to the cell projection. It localises to the axon. The protein resides in the dendrite. It is found in the perikaryon. In terms of biological role, photoreceptor that binds cis-retinaldehydes. Contributes to pupillar reflex, photoentrainment and other non-image forming responses to light. May be involved in the optokinetic visual tracking response. May be involved in the regulation of retinal hyaloid vessel growth and regression. In Homo sapiens (Human), this protein is Melanopsin (OPN4).